We begin with the raw amino-acid sequence, 155 residues long: Crossover junction endodeoxyribonuclease RuvC (155 aa).

Active-site residues include Asp7, Glu68, and Asp140. Asp7, Glu68, and Asp140 together coordinate Mg(2+).

Belongs to the RuvC family. In terms of assembly, homodimer which binds Holliday junction (HJ) DNA. The HJ becomes 2-fold symmetrical on binding to RuvC with unstacked arms; it has a different conformation from HJ DNA in complex with RuvA. In the full resolvosome a probable DNA-RuvA(4)-RuvB(12)-RuvC(2) complex forms which resolves the HJ. Requires Mg(2+) as cofactor.

Its subcellular location is the cytoplasm. It catalyses the reaction Endonucleolytic cleavage at a junction such as a reciprocal single-stranded crossover between two homologous DNA duplexes (Holliday junction).. The RuvA-RuvB-RuvC complex processes Holliday junction (HJ) DNA during genetic recombination and DNA repair. Endonuclease that resolves HJ intermediates. Cleaves cruciform DNA by making single-stranded nicks across the HJ at symmetrical positions within the homologous arms, yielding a 5'-phosphate and a 3'-hydroxyl group; requires a central core of homology in the junction. The consensus cleavage sequence is 5'-(A/T)TT(C/G)-3'. Cleavage occurs on the 3'-side of the TT dinucleotide at the point of strand exchange. HJ branch migration catalyzed by RuvA-RuvB allows RuvC to scan DNA until it finds its consensus sequence, where it cleaves and resolves the cruciform DNA. This chain is Crossover junction endodeoxyribonuclease RuvC, found in Prochlorococcus marinus (strain SARG / CCMP1375 / SS120).